Consider the following 484-residue polypeptide: Adenylyltransferase and sulfurtransferase uba4 (484 aa).

A compositionally biased stretch (low complexity) spans 39 to 49; sequence AKAQSAAATTA. Residues 39–58 form a disordered region; the sequence is AKAQSAAATTAGDNHDKPRR. ATP is bound by residues G98, D119, 126 to 130, K143, and 187 to 188; these read SNLHR and DN. C236 and C239 together coordinate Zn(2+). C253 functions as the Glycyl thioester intermediate; for adenylyltransferase activity in the catalytic mechanism. Zn(2+) is bound by residues C313 and C316. One can recognise a Rhodanese domain in the interval 370–482; the sequence is PEKTPTLIDV…WREQVDPEWP (113 aa). The active-site Cysteine persulfide intermediate; for sulfurtransferase activity is the C437.

It in the N-terminal section; belongs to the HesA/MoeB/ThiF family. UBA4 subfamily. Requires Zn(2+) as cofactor.

It localises to the cytoplasm. The protein localises to the cytosol. It carries out the reaction [molybdopterin-synthase sulfur-carrier protein]-C-terminal Gly-Gly + ATP + H(+) = [molybdopterin-synthase sulfur-carrier protein]-C-terminal Gly-Gly-AMP + diphosphate. The enzyme catalyses [molybdopterin-synthase sulfur-carrier protein]-C-terminal Gly-Gly-AMP + S-sulfanyl-L-cysteinyl-[cysteine desulfurase] + AH2 = [molybdopterin-synthase sulfur-carrier protein]-C-terminal-Gly-aminoethanethioate + L-cysteinyl-[cysteine desulfurase] + A + AMP + 2 H(+). The protein operates within tRNA modification; 5-methoxycarbonylmethyl-2-thiouridine-tRNA biosynthesis. Its pathway is cofactor biosynthesis; molybdopterin biosynthesis. Functionally, plays a central role in 2-thiolation of mcm(5)S(2)U at tRNA wobble positions of cytosolic tRNA(Lys), tRNA(Glu) and tRNA(Gln). Also essential during biosynthesis of the molybdenum cofactor. Acts by mediating the C-terminal thiocarboxylation of sulfur carriers urm1 and mocs2a. Its N-terminus first activates urm1 and mocs2a as acyl-adenylates (-COAMP), then the persulfide sulfur on the catalytic cysteine is transferred to urm1 and mocs2a to form thiocarboxylation (-COSH) of their C-terminus. The reaction probably involves hydrogen sulfide that is generated from the persulfide intermediate and that acts as a nucleophile towards urm1 and mocs2a. Subsequently, a transient disulfide bond is formed. Does not use thiosulfate as sulfur donor; nfs1 probably acting as a sulfur donor for thiocarboxylation reactions. This Aspergillus terreus (strain NIH 2624 / FGSC A1156) protein is Adenylyltransferase and sulfurtransferase uba4.